The chain runs to 481 residues: Glutamine synthetase (481 aa).

One can recognise a GS beta-grasp domain in the interval N22–K106. The GS catalytic domain occupies P114–C481. Residues E139, E141, E223, and E230 each contribute to the Mg(2+) site. L-glutamate-binding positions include N274 to G275 and G275. H279 contributes to the Mg(2+) binding site. ATP contacts are provided by residues H281–S283 and S283. R331, E337, and R349 together coordinate L-glutamate. Positions 349 and 354 each coordinate ATP. E367 provides a ligand contact to Mg(2+). R369 is an L-glutamate binding site.

Belongs to the glutamine synthetase family. As to quaternary structure, oligomer of 12 subunits arranged in the form of two hexameric ring. The cofactor is Mg(2+).

The protein resides in the cytoplasm. The catalysed reaction is L-glutamate + NH4(+) + ATP = L-glutamine + ADP + phosphate + H(+). With respect to regulation, the activity of this enzyme could be controlled by adenylation under conditions of abundant glutamine. In terms of biological role, catalyzes the ATP-dependent biosynthesis of glutamine from glutamate and ammonia. This is Glutamine synthetase from Helicobacter pylori (strain ATCC 700392 / 26695) (Campylobacter pylori).